Consider the following 374-residue polypeptide: Probable dual-specificity RNA methyltransferase RlmN 3 (374 aa).

The active-site Proton acceptor is Glu-96. Residues 110–350 enclose the Radical SAM core domain; it reads DHSRKTICIS…VTLRREKGHD (241 aa). Cys-117 and Cys-355 form a disulfide bridge. [4Fe-4S] cluster is bound by residues Cys-124, Cys-128, and Cys-131. Residues 181–182, Ser-213, 236–238, and Asn-312 each bind S-adenosyl-L-methionine; these read GE and SLH. The S-methylcysteine intermediate role is filled by Cys-355.

Belongs to the radical SAM superfamily. RlmN family. The cofactor is [4Fe-4S] cluster.

Its subcellular location is the cytoplasm. The enzyme catalyses adenosine(2503) in 23S rRNA + 2 reduced [2Fe-2S]-[ferredoxin] + 2 S-adenosyl-L-methionine = 2-methyladenosine(2503) in 23S rRNA + 5'-deoxyadenosine + L-methionine + 2 oxidized [2Fe-2S]-[ferredoxin] + S-adenosyl-L-homocysteine. It carries out the reaction adenosine(37) in tRNA + 2 reduced [2Fe-2S]-[ferredoxin] + 2 S-adenosyl-L-methionine = 2-methyladenosine(37) in tRNA + 5'-deoxyadenosine + L-methionine + 2 oxidized [2Fe-2S]-[ferredoxin] + S-adenosyl-L-homocysteine. In terms of biological role, specifically methylates position 2 of adenine 2503 in 23S rRNA and position 2 of adenine 37 in tRNAs. The sequence is that of Probable dual-specificity RNA methyltransferase RlmN 3 from Opitutus terrae (strain DSM 11246 / JCM 15787 / PB90-1).